Reading from the N-terminus, the 1082-residue chain is RhoGEF domain-containing protein gxcI (1082 aa).

Residues Met1–Phe15 show a composition bias toward polar residues. 5 disordered regions span residues Met1–Asn29, Asp59–Gln78, Tyr91–Leu394, Lys438–Asn488, and Ile504–Leu524. Low complexity-rich tracts occupy residues Lys20–Asn29, Gln62–Gln71, Pro96–Pro109, Leu116–Pro160, and Pro170–Pro184. The span at Thr185–Pro206 shows a compositional bias: pro residues. Low complexity predominate over residues Asn211–Asn244. Pro residues predominate over residues Pro262–Pro276. The segment covering Thr282–Lys366 has biased composition (low complexity). Over residues Pro367–Lys379 the composition is skewed to pro residues. Positions Ser450–Pro473 are enriched in low complexity. The region spanning Ser622 to Lys817 is the DH domain. Residues Gln838–Leu994 form a PH-like region. Disordered regions lie at residues Asn920 to Pro961 and Asn1017 to Asn1060.

Its function is as follows. GTPase-activating protein. This is RhoGEF domain-containing protein gxcI (gxcI) from Dictyostelium discoideum (Social amoeba).